A 95-amino-acid polypeptide reads, in one-letter code: Co-chaperonin GroES (95 aa).

It belongs to the GroES chaperonin family. In terms of assembly, heptamer of 7 subunits arranged in a ring. Interacts with the chaperonin GroEL.

Its subcellular location is the cytoplasm. Together with the chaperonin GroEL, plays an essential role in assisting protein folding. The GroEL-GroES system forms a nano-cage that allows encapsulation of the non-native substrate proteins and provides a physical environment optimized to promote and accelerate protein folding. GroES binds to the apical surface of the GroEL ring, thereby capping the opening of the GroEL channel. This Rickettsia typhi (strain ATCC VR-144 / Wilmington) protein is Co-chaperonin GroES.